The sequence spans 855 residues: Cone cGMP-specific 3',5'-cyclic phosphodiesterase subunit alpha' (855 aa).

2 GAF domains span residues 70 to 219 (SVEL…SIIL) and 251 to 428 (DVER…GWSL). Residues serine 92, serine 116, 164–167 (DKQT), and threonine 171 each bind 3',5'-cyclic GMP. The 334-residue stretch at 481–814 (EEKQLVTILK…VEWKSLADEY (334 aa)) folds into the PDEase domain. Catalysis depends on histidine 557, which acts as the Proton donor. The a divalent metal cation site is built by histidine 561, histidine 597, aspartate 598, and aspartate 718. The disordered stretch occupies residues 823 to 855 (EMKKQEEGNTTEKAVEDSGGGGDDKKSKTCLML). Cysteine 852 carries the cysteine methyl ester modification. The S-geranylgeranyl cysteine moiety is linked to residue cysteine 852. Positions 853–855 (LML) are cleaved as a propeptide — removed in mature form.

This sequence belongs to the cyclic nucleotide phosphodiesterase family. In terms of assembly, composed of two alpha' subunits that are associated with 3 smaller proteins of 11, 13, and 15 kDa. A divalent metal cation is required as a cofactor.

It localises to the cell membrane. It catalyses the reaction 3',5'-cyclic GMP + H2O = GMP + H(+). Functionally, as cone-specific cGMP phosphodiesterase, it plays an essential role in light detection and cone phototransduction by rapidly decreasing intracellular levels of cGMP. The chain is Cone cGMP-specific 3',5'-cyclic phosphodiesterase subunit alpha' (PDE6C) from Bos taurus (Bovine).